A 260-amino-acid polypeptide reads, in one-letter code: Hydroxyethylthiazole kinase 1 (260 aa).

Position 39 (Met39) interacts with substrate. ATP contacts are provided by Arg115 and Thr160. Gly187 contributes to the substrate binding site.

This sequence belongs to the Thz kinase family. The cofactor is Mg(2+).

It carries out the reaction 5-(2-hydroxyethyl)-4-methylthiazole + ATP = 4-methyl-5-(2-phosphooxyethyl)-thiazole + ADP + H(+). It participates in cofactor biosynthesis; thiamine diphosphate biosynthesis; 4-methyl-5-(2-phosphoethyl)-thiazole from 5-(2-hydroxyethyl)-4-methylthiazole: step 1/1. Functionally, catalyzes the phosphorylation of the hydroxyl group of 4-methyl-5-beta-hydroxyethylthiazole (THZ). This is Hydroxyethylthiazole kinase 1 from Streptococcus pneumoniae (strain Taiwan19F-14).